A 197-amino-acid polypeptide reads, in one-letter code: EF-hand calcium-binding domain-containing protein 9 (197 aa).

Ca(2+)-binding residues include Asp-58 and Asp-69. 3 consecutive EF-hand domains span residues 59–94 (LKKA…LLAH), 100–135 (GQFM…FLFN), and 136–171 (IQKQ…YTDK). Asp-149, Asp-153, Arg-155, and Glu-160 together coordinate Ca(2+). Over residues 177–188 (KTEEKEKGERKR) the composition is skewed to basic and acidic residues. The interval 177–197 (KTEEKEKGERKRSLYSKCHIK) is disordered.

As to quaternary structure, component of the CatSper complex or CatSpermasome composed of the core pore-forming members CATSPER1, CATSPER2, CATSPER3 and CATSPER4 as well as auxiliary members CATSPERB, CATSPERG, CATSPERD, CATSPERE, CATSPERZ, C2CD6/CATSPERT, TMEM249, TMEM262 and EFCAB9. HSPA1 may be an additional auxiliary complex member. The core complex members CATSPER1, CATSPER2, CATSPER3 and CATSPER4 form a heterotetrameric channel. The auxiliary CATSPERB, CATSPERG, CATSPERD and CATSPERE subunits form a pavilion-like structure over the pore which stabilizes the complex through interactions with CATSPER4, CATSPER3, CATSPER1 and CATSPER2 respectively. TMEM262/CATSPERH interacts with CATSPERB, further stabilizing the complex. C2CD6/CATSPERT interacts at least with CATSPERD and is required for targeting the CatSper complex in the flagellar membrane. Interacts with CATSPERZ; the interaction is direct, Ca(2+)-dependent and connects EFCAB9 with the CatSper complex. Dissociates from CATSPERZ at elevated pH.

Its subcellular location is the cytoplasm. It is found in the cell projection. The protein resides in the cilium. The protein localises to the flagellum. Functionally, auxiliary component of the CatSper complex, a complex involved in sperm cell hyperactivation. pH-dependent Ca(2+) sensor required to activate the CatSper channel. Sperm cell hyperactivation is needed for sperm motility which is essential late in the preparation of sperm for fertilization. Associates with the CatSper complex via direct interaction with CATSPERZ, and senses intracellular Ca(2+). Together with CATSPERZ, associates with the CatSper channel pore and is required for the two-row structure of each single CatSper channel. The chain is EF-hand calcium-binding domain-containing protein 9 from Homo sapiens (Human).